A 30-amino-acid chain; its full sequence is U5-ctenitoxin-Pk1b (30 aa).

2 cysteine pairs are disulfide-bonded: cysteine 6-cysteine 23 and cysteine 13-cysteine 29.

It belongs to the neurotoxin 04 (omega-agtx) family. 02 (Tx1) subfamily. As to expression, expressed by the venom gland.

The protein localises to the secreted. In terms of biological role, lethal neurotoxin. Causes spastic paralysis and death in mice in 4-6 minutes after intracerebroventricular injection at dose levels of 1.5 ug per mouse. The protein is U5-ctenitoxin-Pk1b of Phoneutria keyserlingi (Brazilian wandering spider).